Reading from the N-terminus, the 229-residue chain is Large ribosomal subunit protein uL1 (229 aa).

The protein belongs to the universal ribosomal protein uL1 family. As to quaternary structure, part of the 50S ribosomal subunit.

Its function is as follows. Binds directly to 23S rRNA. The L1 stalk is quite mobile in the ribosome, and is involved in E site tRNA release. Protein L1 is also a translational repressor protein, it controls the translation of the L11 operon by binding to its mRNA. The protein is Large ribosomal subunit protein uL1 of Clostridium kluyveri (strain ATCC 8527 / DSM 555 / NBRC 12016 / NCIMB 10680 / K1).